The chain runs to 152 residues: UPF0735 ACT domain-containing protein SAS1579 (152 aa).

The ACT domain occupies 75–150; it reads TLILYVTDIV…YVSKVELISM (76 aa).

It belongs to the UPF0735 family.

In Staphylococcus aureus (strain MSSA476), this protein is UPF0735 ACT domain-containing protein SAS1579.